The sequence spans 140 residues: NADH-quinone oxidoreductase subunit I (140 aa).

2 consecutive 4Fe-4S ferredoxin-type domains span residues 42 to 71 (GSFT…VGSI) and 81 to 110 (ASYE…FNQE). [4Fe-4S] cluster is bound by residues Cys-51, Cys-54, Cys-57, Cys-61, Cys-90, Cys-93, Cys-96, and Cys-100.

It belongs to the complex I 23 kDa subunit family. As to quaternary structure, NDH-1 is composed of 14 different subunits. Subunits NuoA, H, J, K, L, M, N constitute the membrane sector of the complex. [4Fe-4S] cluster serves as cofactor.

The protein resides in the cell membrane. The catalysed reaction is a quinone + NADH + 5 H(+)(in) = a quinol + NAD(+) + 4 H(+)(out). Its function is as follows. NDH-1 shuttles electrons from NADH, via FMN and iron-sulfur (Fe-S) centers, to quinones in the respiratory chain. The immediate electron acceptor for the enzyme in this species is believed to be ubiquinone. Couples the redox reaction to proton translocation (for every two electrons transferred, four hydrogen ions are translocated across the cytoplasmic membrane), and thus conserves the redox energy in a proton gradient. This is NADH-quinone oxidoreductase subunit I from Carboxydothermus hydrogenoformans (strain ATCC BAA-161 / DSM 6008 / Z-2901).